Consider the following 1386-residue polypeptide: Putative ATP-dependent RNA helicase DHX57 (1386 aa).

Residues 1–11 (MSSSVRRKGKP) are compositionally biased toward basic residues. Disordered regions lie at residues 1 to 106 (MSSS…MTSE) and 120 to 147 (EQDA…NDER). Composition is skewed to gly residues over residues 12–23 (GKGGGKGSSRGG) and 35–50 (GSGG…GGGN). Residues 101-125 (LHMTSENQEKVKALLRDLQEQDADA) are a coiled coil. 2 positions are modified to phosphoserine: S127 and S132. Acidic residues predominate over residues 133–143 (GEEEDDEPDCC). One can recognise a UBA domain in the interval 180–220 (TVSPFAVQKLSRYGFNTERCQAVLRMCDGDVGASLEHLLTQ). Residues 299–326 (ENSLEICKFYLKGNCKFGSKCRFKHEVP) form a C3H1-type zinc finger. A phosphoserine mark is found at S475, S477, and S480. A Helicase ATP-binding domain is found at 554–721 (LNLLRKHQVV…FNSCPVITIP (168 aa)). 567 to 574 (GMTGCGKT) contributes to the ATP binding site. Positions 668–671 (DEVH) match the DEVH box motif. The Helicase C-terminal domain maps to 830–1010 (LIEALLEWIV…QLCLRIKILE (181 aa)).

This sequence belongs to the DEAD box helicase family. DEAH subfamily.

The catalysed reaction is ATP + H2O = ADP + phosphate + H(+). Functionally, probable ATP-binding RNA helicase. In Homo sapiens (Human), this protein is Putative ATP-dependent RNA helicase DHX57 (DHX57).